A 149-amino-acid polypeptide reads, in one-letter code: Protein FAM72C (149 aa).

The protein belongs to the FAM72 family.

This is Protein FAM72C (FAM72C) from Homo sapiens (Human).